A 605-amino-acid chain; its full sequence is Endonuclease 8-like 3 (605 aa).

Residue Val2 is the Schiff-base intermediate with DNA; via amino nitrogen of the active site. DNA-binding residues include Asn192 and Arg271. The segment at 247–281 adopts an FPG-type zinc-finger fold; it reads KVYKRPNCGQCHCRITVCRFGDNNRMTYFCPHCQK. A RanBP2-type zinc finger spans residues 317 to 346; it reads SEEHWTCVVCTLINKPSSKACDACLTSRPI. Residue Ser450 is modified to Phosphoserine. The tract at residues 456-477 is disordered; that stretch reads ESKLFSPAHKKPKTAQYSSPEL. Zn(2+) is bound by residues Cys507, His510, Cys533, Cys541, Cys554, His556, Cys579, and Cys587. GRF-type zinc fingers lie at residues 507 to 550 and 554 to 596; these read CSKH…ADLS and CNHG…AENG.

The protein belongs to the FPG family. As to expression, expressed in keratinocytes and embryonic fibroblasts (at protein level). Also detected in thymus, testis and fetal lung primary fibroblasts.

It is found in the nucleus. The protein resides in the chromosome. It catalyses the reaction 2'-deoxyribonucleotide-(2'-deoxyribose 5'-phosphate)-2'-deoxyribonucleotide-DNA = a 3'-end 2'-deoxyribonucleotide-(2,3-dehydro-2,3-deoxyribose 5'-phosphate)-DNA + a 5'-end 5'-phospho-2'-deoxyribonucleoside-DNA + H(+). Functionally, DNA glycosylase which prefers single-stranded DNA (ssDNA), or partially ssDNA structures such as bubble and fork structures, to double-stranded DNA (dsDNA). Mediates interstrand cross-link repair in response to replication stress: acts by mediating DNA glycosylase activity, cleaving one of the two N-glycosyl bonds comprising the interstrand cross-link, which avoids the formation of a double-strand break but generates an abasic site that is bypassed by translesion synthesis polymerases. In vitro, displays strong glycosylase activity towards the hydantoin lesions spiroiminodihydantoin (Sp) and guanidinohydantoin (Gh) in both ssDNA and dsDNA; also recognizes FapyA, FapyG, 5-OHU, 5-OHC, 5-OHMH, Tg and 8-oxoA lesions in ssDNA. No activity on 8-oxoG detected. Also shows weak DNA-(apurinic or apyrimidinic site) lyase activity. In vivo, appears to be the primary enzyme involved in removing Sp and Gh from ssDNA in neonatal tissues. This chain is Endonuclease 8-like 3 (NEIL3), found in Homo sapiens (Human).